A 101-amino-acid chain; its full sequence is Small ribosomal subunit protein uS14 (101 aa).

The protein belongs to the universal ribosomal protein uS14 family. In terms of assembly, part of the 30S ribosomal subunit. Contacts proteins S3 and S10.

Functionally, binds 16S rRNA, required for the assembly of 30S particles and may also be responsible for determining the conformation of the 16S rRNA at the A site. The sequence is that of Small ribosomal subunit protein uS14 from Sodalis glossinidius (strain morsitans).